We begin with the raw amino-acid sequence, 216 residues long: Nicotinamidase (216 aa).

Residue Asp-8 is part of the active site. 3 residues coordinate Zn(2+): Asp-51, His-53, and His-94. Residue Lys-122 is part of the active site. The active-site Nucleophile is the Cys-167.

Belongs to the isochorismatase family.

Its subcellular location is the cytoplasm. It is found in the nucleus. The protein resides in the peroxisome. It carries out the reaction nicotinamide + H2O = nicotinate + NH4(+). It functions in the pathway cofactor biosynthesis; nicotinate biosynthesis; nicotinate from nicotinamide: step 1/1. Its activity is regulated as follows. Inhibited by N-ethylmaleimide, HgCl(2) and PCMB. Competitively inhibited by NAD, NMN and 3-acetylpyridine. Catalyzes the deamidation of nicotinamide, an early step in the NAD(+) salvage pathway. Positively regulates SIR2-mediated silencing and longevity by preventing the accumulation of intracellular nicotinamide, an inhibitor of SIR2, during times of stress. Also acts on nicotinyl hydroxamate. This Saccharomyces cerevisiae (strain ATCC 204508 / S288c) (Baker's yeast) protein is Nicotinamidase (PNC1).